The sequence spans 143 residues: Peptide methionine sulfoxide reductase MsrB (143 aa).

Positions aspartate 16–arginine 139 constitute a MsrB domain. Positions 55, 58, 104, and 107 each coordinate Zn(2+). The active-site Nucleophile is the cysteine 128.

This sequence belongs to the MsrB Met sulfoxide reductase family. Requires Zn(2+) as cofactor.

It carries out the reaction L-methionyl-[protein] + [thioredoxin]-disulfide + H2O = L-methionyl-(R)-S-oxide-[protein] + [thioredoxin]-dithiol. The chain is Peptide methionine sulfoxide reductase MsrB from Burkholderia cenocepacia (strain HI2424).